We begin with the raw amino-acid sequence, 168 residues long: uncharacterized protein (168 aa).

Disordered regions lie at residues 1-81 (MSSA…GRSW) and 119-150 (RDLS…STVA). Low complexity predominate over residues 7–34 (SRTSRSKATGASSSSISSSIRASPSSSS). The span at 43–67 (TRRRRRRTGRRSTKRSIISPRRRRM) shows a compositional bias: basic residues. The segment covering 123–146 (ESASTGSENLSRKASNQSQSQGRL) has biased composition (polar residues).

This is an uncharacterized protein from Human adenovirus C serotype 2 (HAdV-2).